We begin with the raw amino-acid sequence, 1602 residues long: Calmodulin-regulated spectrin-associated protein 1 (1602 aa).

Positions 216–331 (ESPAHQKVRY…FIAELFWWFE (116 aa)) constitute a Calponin-homology (CH) domain. Phosphoserine occurs at positions 217, 371, 375, 416, and 431. The disordered stretch occupies residues 426–471 (QKQQKSIQGEDIPDQRHRSNSLTRVDGQPRGAAIAWPEKKTRPASQ). Residue T512 is modified to Phosphothreonine. 3 positions are modified to phosphoserine: S563, S575, and S589. Residues 603 to 620 (AKEKQVITKEDERGEGRP) are compositionally biased toward basic and acidic residues. The interval 603 to 637 (AKEKQVITKEDERGEGRPRSIVSRRPSEGPQPLVR) is disordered. S629, S722, S728, S738, and S740 each carry phosphoserine. The span at 772–789 (KLQEDMKVKEHEDKDDAS) shows a compositional bias: basic and acidic residues. Disordered regions lie at residues 772 to 808 (KLQE…VSMA) and 825 to 870 (LNSC…GKDP). Low complexity-rich tracts occupy residues 797–808 (STASQMSSVSMA) and 830–841 (TKSSTSSSQKTT). Residues 857–869 (QKREQSPSQHGKD) show a composition bias toward basic and acidic residues. Residues 871 to 892 (ASLLASELVQLHMQLEEKRRAI) form a sufficient for interaction with SPTBN1 region. Coiled coils occupy residues 873–909 (LLAS…QRLK) and 1016–1048 (DVNE…QEQL). Residues 903 to 922 (SARQRLKLGKAAFLHVVKKG) are sufficient for interaction with calmodulin. 3 disordered regions span residues 1075–1165 (FVEP…GKCL), 1206–1226 (KEVG…VEEP), and 1301–1448 (ARVR…DWET). The residue at position 1080 (S1080) is a Phosphoserine. Residues 1103 to 1114 (RPAELKVPKDRP) show a composition bias toward basic and acidic residues. Residues 1115-1127 (QGSSRSKTPTPSV) are compositionally biased toward polar residues. Residues 1206-1220 (KEVGSSSSDVSGKES) show a composition bias toward low complexity. A coiled-coil region spans residues 1291 to 1343 (LLKQQRKAEEARVRKQQLEAEVELKRDEARRKAEEDRVRKEEEKARRELIKQE). Basic and acidic residues predominate over residues 1301–1346 (ARVRKQQLEAEVELKRDEARRKAEEDRVRKEEEKARRELIKQEYLR). The segment covering 1361–1372 (PKSKPKKPRPKS) has biased composition (basic residues). Residues 1380–1392 (SDSGTKCSSTPDN) show a composition bias toward polar residues. Residues 1393-1410 (LSRTQSGSSLSLASAATT) show a composition bias toward low complexity. S1398 and S1427 each carry phosphoserine. A CKK domain is found at 1463–1597 (GPKLFKEPSS…QPKRPAVPKK (135 aa)). Phosphotyrosine is present on Y1537.

It belongs to the CAMSAP1 family. As to quaternary structure, interacts with spectrin via SPTBN1; the interaction is direct. Interacts with calmodulin; calcium-dependent it prevents interaction with spectrin.

The protein resides in the cytoplasm. It localises to the cytoskeleton. Key microtubule-organizing protein that specifically binds the minus-end of non-centrosomal microtubules and regulates their dynamics and organization. Specifically recognizes growing microtubule minus-ends and stabilizes microtubules. Acts on free microtubule minus-ends that are not capped by microtubule-nucleating proteins or other factors and protects microtubule minus-ends from depolymerization. In contrast to CAMSAP2 and CAMSAP3, tracks along the growing tips of minus-end microtubules without significantly affecting the polymerization rate: binds at the very tip of the microtubules minus-end and acts as a minus-end tracking protein (-TIP) that dissociates from microtubules after allowing tubulin incorporation. Through interaction with spectrin may regulate neurite outgrowth. The polypeptide is Calmodulin-regulated spectrin-associated protein 1 (CAMSAP1) (Homo sapiens (Human)).